We begin with the raw amino-acid sequence, 952 residues long: Isoleucine--tRNA ligase (952 aa).

The short motif at 58 to 68 (PYANGDIHIGH) is the 'HIGH' region element. Position 576 (E576) interacts with L-isoleucyl-5'-AMP. The short motif at 617–621 (KMSKS) is the 'KMSKS' region element. Residue K620 participates in ATP binding. Zn(2+) contacts are provided by C915, C918, C935, and C938.

This sequence belongs to the class-I aminoacyl-tRNA synthetase family. IleS type 1 subfamily. In terms of assembly, monomer. It depends on Zn(2+) as a cofactor.

It is found in the cytoplasm. The catalysed reaction is tRNA(Ile) + L-isoleucine + ATP = L-isoleucyl-tRNA(Ile) + AMP + diphosphate. Functionally, catalyzes the attachment of isoleucine to tRNA(Ile). As IleRS can inadvertently accommodate and process structurally similar amino acids such as valine, to avoid such errors it has two additional distinct tRNA(Ile)-dependent editing activities. One activity is designated as 'pretransfer' editing and involves the hydrolysis of activated Val-AMP. The other activity is designated 'posttransfer' editing and involves deacylation of mischarged Val-tRNA(Ile). The sequence is that of Isoleucine--tRNA ligase from Aliivibrio fischeri (strain ATCC 700601 / ES114) (Vibrio fischeri).